The following is a 254-amino-acid chain: Membrane protein US20 (254 aa).

The next 7 membrane-spanning stretches (helical) occupy residues Ala-31–Phe-51, Tyr-62–Gly-82, Ala-89–Cys-109, Val-114–Phe-134, Trp-143–Leu-163, Ala-178–Phe-198, and Ala-208–Gly-228.

It is found in the host membrane. The polypeptide is Membrane protein US20 (US20) (Homo sapiens (Human)).